Reading from the N-terminus, the 845-residue chain is Alanine--tRNA ligase (845 aa).

H552, H556, C653, and H657 together coordinate Zn(2+).

The protein belongs to the class-II aminoacyl-tRNA synthetase family. The cofactor is Zn(2+).

It localises to the cytoplasm. The catalysed reaction is tRNA(Ala) + L-alanine + ATP = L-alanyl-tRNA(Ala) + AMP + diphosphate. Catalyzes the attachment of alanine to tRNA(Ala) in a two-step reaction: alanine is first activated by ATP to form Ala-AMP and then transferred to the acceptor end of tRNA(Ala). Also edits incorrectly charged Ser-tRNA(Ala) and Gly-tRNA(Ala) via its editing domain. The sequence is that of Alanine--tRNA ligase from Campylobacter hominis (strain ATCC BAA-381 / DSM 21671 / CCUG 45161 / LMG 19568 / NCTC 13146 / CH001A).